We begin with the raw amino-acid sequence, 3508 residues long: WD repeat and FYVE domain-containing protein 3 (3508 aa).

Residues serine 1942 and serine 2277 each carry the phosphoserine modification. Disordered regions lie at residues 2279 to 2303 (FGLS…SPSP) and 2441 to 2504 (SSEG…EKTD). The tract at residues 2284–2963 (LTGSRRNRKE…PHPPKRVRSR (680 aa)) is sufficient for translocalization to p62 bodies/ALIS. Residues 2450 to 2459 (EPEHGEDTIA) show a composition bias toward basic and acidic residues. Phosphoserine is present on serine 2474. Positions 2513-2638 (EEGEKIQHMY…IRNKVYQRFL (126 aa)) constitute a BEACH-type PH domain. An interaction with SQSTM1 region spans residues 2568–3508 (MHEPIIPRGA…RGAEDGPRNC (941 aa)). In terms of domain architecture, BEACH spans 2665 to 2958 (GLLSTLVGEK…QLFKKPHPPK (294 aa)). An interaction with ATG5 region spans residues 2963-3508 (RLNGDNIGIS…RGAEDGPRNC (546 aa)). 4 WD repeats span residues 3059-3097 (SEWG…EKAK), 3107-3146 (GHTD…FLTQ), 3149-3188 (GHRA…VSVN), and 3192-3236 (GRSQ…VPET). Positions 3254–3317 (AQIGQQAQDD…SGSDDSRRWS (64 aa)) are disordered. The span at 3261–3272 (QDDDSSDSETEE) shows a compositional bias: acidic residues. Residues serine 3317 and serine 3321 each carry the phosphoserine modification. Residues 3326 to 3331 (DGFIFV) carry the LIR motif. One copy of the WD 5 repeat lies at 3390-3429 (THPAEVTALGVSKDHSRILVGDSRGRVFSWSVSDQPGRSA). The FYVE-type zinc-finger motif lies at 3436–3496 (DEGGDSCSGC…VCQNCYYSLQ (61 aa)). Zn(2+) contacts are provided by cysteine 3442, cysteine 3445, cysteine 3458, cysteine 3461, cysteine 3466, cysteine 3469, cysteine 3488, and cysteine 3491.

Directly interacts with ATG5 and associates with the ATG12-ATG5-ATG16L complex. Interacts with p62/SQSTM1. Directly interacts with GABARAP, GABARAPL1 and GABARAPL2; the interaction with GABARAP is required for WDFY3 recruitment to MAP1LC3B-positive p62/SQSTM1 bodies. Weakly interacts with MAP1LC3C; this interaction is direct. Does not interact with MAP1LC3A, nor MAP1LC3B. Interacts with TRAF6. As to expression, widely expressed, with high levels in the brain (at protein level). In the brain, expressed by both neuronal and non-neuronal cells. Expressed in bones, in the periosteum, cartilage, growth plate, trabeculae of the primary spongiosa, and scattered hematopoietic cells within the medullary cavity. Tends to be expressed at lower levels in the hypertrophic zone compared to trabeculae. Expressed in osteoblasts, osteoclasts and bone-marrow derived macrophages.

It localises to the nucleus. The protein resides in the cytoplasm. It is found in the cytosol. The protein localises to the PML body. Its subcellular location is the membrane. It localises to the perikaryon. The protein resides in the cell projection. It is found in the axon. Its function is as follows. Required for selective macroautophagy (aggrephagy). Acts as an adapter protein by linking specific proteins destined for degradation to the core autophagic machinery members, such as the ATG5-ATG12-ATG16L E3-like ligase, SQSTM1 and LC3. Involved in the formation and autophagic degradation of cytoplasmic ubiquitin-containing inclusions (p62 bodies, ALIS/aggresome-like induced structures). Important for normal brain development. Essential for the formation of axonal tracts throughout the brain and spinal cord, including the formation of the major forebrain commissures. Involved in the ability of neural cells to respond to guidance cues. Required for cortical neurons to respond to the trophic effects of netrin-1/NTN1. Regulates Wnt signaling through the removal of DVL3 aggregates, likely in an autophagy-dependent manner. This process may be important for the determination of brain size during embryonic development. May regulate osteoclastogenesis by acting on the TNFSF11/RANKL - TRAF6 pathway. After cytokinetic abscission, involved in midbody remnant degradation. In vitro strongly binds to phosphatidylinositol 3-phosphate (PtdIns3P). This is WD repeat and FYVE domain-containing protein 3 (Wdfy3) from Mus musculus (Mouse).